A 296-amino-acid chain; its full sequence is Phosphatidylcholine:diacylglycerol cholinephosphotransferase 2 (296 aa).

Helical transmembrane passes span histidine 83–phenylalanine 103, valine 136–tryptophan 156, threonine 165–threonine 182, proline 198–alanine 218, and glycine 250–alanine 270. Catalysis depends on residues histidine 211, histidine 251, and aspartate 255.

This sequence belongs to the phosphatidylcholine:diacylglycerol cholinephosphotransferase family.

The protein resides in the membrane. Functionally, functions as a phosphatidylcholine:diacylglycerol cholinephosphotransferase that catalyzes the transfer of the phosphocholine headgroup from phosphatidylcholine (PC) to diacylglycerol, a major reaction for the transfer of 18:1 into phosphatidylcholine for desaturation and also for the reverse transfer of 18:2 and 18:3 into the triacylglycerols synthesis pathway. The sequence is that of Phosphatidylcholine:diacylglycerol cholinephosphotransferase 2 from Arabidopsis thaliana (Mouse-ear cress).